The following is a 344-amino-acid chain: MIGNFSCETDEIKRIVLNFALQVQKKFPSNFQKNKKRIIVIAGPTCCGKSALALNLAQTMDGEIISADSMQVYRGMDIGTAKATKEERLFVPHHLIDIRDIQESFNVVDFYYEARQACQKILDQGNVPIIAGGSGFYLHALLYGPPSGPPSVPEVRKSFEDEIERLGSEILYERLSQLDPQYAKTITKNDKQKIVRALEIMMLTNKKVSKLSWKGRRKPQNYDFRCWFLHRPKEKLYERIDKRCDKMLEEGFMDEVRHLDSLGIRGNSSASQAIGYRQALNFLKTEQTASQYQEFIRSFKQATRHYAKRQFTWFRKEPLFRWLDVDMHDPEVVFDMILKDYELL.

An ATP-binding site is contributed by 43–50 (GPTCCGKS). Residue 45 to 50 (TCCGKS) participates in substrate binding. Residues 68–71 (DSMQ) are interaction with substrate tRNA.

Belongs to the IPP transferase family. Monomer. Mg(2+) serves as cofactor.

It catalyses the reaction adenosine(37) in tRNA + dimethylallyl diphosphate = N(6)-dimethylallyladenosine(37) in tRNA + diphosphate. Functionally, catalyzes the transfer of a dimethylallyl group onto the adenine at position 37 in tRNAs that read codons beginning with uridine, leading to the formation of N6-(dimethylallyl)adenosine (i(6)A). The chain is tRNA dimethylallyltransferase from Protochlamydia amoebophila (strain UWE25).